We begin with the raw amino-acid sequence, 109 residues long: uncharacterized protein (109 aa).

The chain crosses the membrane as a helical span at residues Tyr78 to Ile98.

The protein localises to the membrane. This is an uncharacterized protein from Saccharomyces cerevisiae (strain ATCC 204508 / S288c) (Baker's yeast).